Reading from the N-terminus, the 440-residue chain is Gap junction alpha-8 protein (440 aa).

An intramembrane segment occupies 2 to 12; sequence GDWSFLGNILE. Topologically, residues 13-21 are cytoplasmic; sequence EVNEHSTVI. Residues 22–42 traverse the membrane as a helical segment; that stretch reads GRVWLTVLFIFRILILGTAAE. Over 43–71 the chain is Extracellular; that stretch reads FVWGDEQSDFVCNTQQPGCENVCYDEAFP. Cystine bridges form between Cys-54–Cys-201, Cys-61–Cys-195, and Cys-65–Cys-190. Residues 72–92 traverse the membrane as a helical segment; it reads ISHIRLWVLQIIFVSTPSLMY. Over 93–161 the chain is Cytoplasmic; that stretch reads VGHAVHHVRM…GTLLRTYVCH (69 aa). The tract at residues 111-143 is disordered; the sequence is AEELCQQSRSNGGERVPIAPDQASIRKSSSSSK. The chain crosses the membrane as a helical span at residues 162–182; the sequence is IIFKTLFEVGFIVGHYFLYGF. The Extracellular portion of the chain corresponds to 183–210; that stretch reads RILPLYRCSRWPCPNVVDCFVSRPTEKT. The chain crosses the membrane as a helical span at residues 211–231; the sequence is IFILFMLSVAFVSLFLNIMEM. Residues 232-440 lie on the Cytoplasmic side of the membrane; sequence SHLGMKGIRS…SRARSDDLTI (209 aa). The interval 338-440 is disordered; it reads VEREEPPIEE…SRARSDDLTI (103 aa). Composition is skewed to basic and acidic residues over residues 353–364 and 374–399; these read VGEKKQEAEKVA and PDRERVETPGVGKEDEKEELQAEKVT. Residues 423 to 432 show a composition bias toward low complexity; sequence LSRLSKASSR.

It belongs to the connexin family. Alpha-type (group II) subfamily. In terms of assembly, a hemichannel or connexon is composed of a hexamer of connexins. A functional gap junction is formed by the apposition of two hemichannels. Forms heteromeric channels with GJA3. Detected in eye lens (at protein level). Eye lens.

It is found in the cell membrane. It localises to the cell junction. The protein localises to the gap junction. In terms of biological role, structural component of eye lens gap junctions. Gap junctions are dodecameric channels that connect the cytoplasm of adjoining cells. They are formed by the docking of two hexameric hemichannels, one from each cell membrane. Small molecules and ions diffuse from one cell to a neighboring cell via the central pore. The sequence is that of Gap junction alpha-8 protein (Gja8) from Mus musculus (Mouse).